The chain runs to 492 residues: Transcript termination protein OPG145 (492 aa).

The 157-residue stretch at 100–256 (MIELKRPLYI…NSIINIAKLS (157 aa)) folds into the Helicase ATP-binding domain. ATP is bound at residue 113–120 (LACGFGKT). The short motif at 206 to 209 (DESH) is the DEAH box element.

Belongs to the helicase family. Poxviruses subfamily. As to quaternary structure, interacts with OPG087. Might be part of a transcription complex composed at least of OPG087, OPG110, and OPG145.

Its subcellular location is the virion. In terms of biological role, DNA helicase which seems to act as a postreplicative transcription termination factor. Involved in ATP-dependent release of nascent RNA. Forms a stable complex with single-stranded DNA, and to a lesser extent RNA. The polypeptide is Transcript termination protein OPG145 (OPG145) (Cynomys gunnisoni (Gunnison's prairie dog)).